The chain runs to 192 residues: UPF0301 protein BceJ2315_30870 (192 aa).

It belongs to the UPF0301 (AlgH) family.

This chain is UPF0301 protein BceJ2315_30870, found in Burkholderia cenocepacia (strain ATCC BAA-245 / DSM 16553 / LMG 16656 / NCTC 13227 / J2315 / CF5610) (Burkholderia cepacia (strain J2315)).